Reading from the N-terminus, the 332-residue chain is Melanocortin receptor 4 (332 aa).

The Extracellular segment spans residues 1-43 (MNSTQPLGMHTSLHSWNRSAHGMPTNVSESLAKGYSDGGCYEQ). N-linked (GlcNAc...) asparagine glycans are attached at residues Asn-2, Asn-17, and Asn-26. Cystine bridges form between Cys-40/Cys-279 and Cys-271/Cys-277. Residues 44–69 (LFVSPEVFVTLGVISLLENILVIVAI) traverse the membrane as a helical segment. Residues 70 to 81 (AKNKNLHSPMYF) lie on the Cytoplasmic side of the membrane. Residues 82 to 106 (FICSLAVADMLVSVSNGSETIVITL) traverse the membrane as a helical segment. Glu-100, Asp-122, and Asp-126 together coordinate Ca(2+). Topologically, residues 107–123 (LNSTDTDAQSFTVDIDN) are extracellular. Residues 124–145 (VIDSVICSSLLASICSLLSIAV) form a helical membrane-spanning segment. The Cytoplasmic segment spans residues 146-165 (DRYFTIFYALQYHNIMTVKR). A helical membrane pass occupies residues 166 to 186 (VAITISAIWAACTVSGVLFII). The Extracellular portion of the chain corresponds to 187 to 191 (YSDSS). A helical transmembrane segment spans residues 192-215 (AVIICLITVFFTMLALMASLYVHM). At 216–248 (FLMARLHIKRIAVLPGSGTIRQGANMKGAITLT) the chain is on the cytoplasmic side. A helical transmembrane segment spans residues 249-271 (ILIGVFVVCWAPFFLHLIFYISC). At 272–280 (PQNPYCVCF) the chain is on the extracellular side. Residues 281 to 304 (MSHFNLYLILIMCNSIIDPLIYAL) form a helical membrane-spanning segment. Residues 305-332 (RSQELRKTFKEIICCSPLGGLCDLSSRY) lie on the Cytoplasmic side of the membrane. The S-palmitoyl cysteine moiety is linked to residue Cys-318.

Belongs to the G-protein coupled receptor 1 family. As to quaternary structure, homodimer; disulfide-linked, also forms higher order oligomers. Interacts with GNAS. Interacts with ATRNL1. Interacts with MGRN1; this interaction competes with GNAS-binding and thus inhibits agonist-induced cAMP production. Interacts with MRAP and MRAP2; these associated factors increase ligand-sensitivity and generation of cAMP.

It localises to the cell membrane. Functionally, hormone receptor that acts as a key component of the leptin-melanocortin pathway at the intersection of homeostatic maintenance of energetic state. Plays a role in regulating food intake: activation by a stimulating hormone such as anorexigenic alpha-melanocyte stimulating hormone (alpha-MSH) inhibits appetite, whereas binding to a natural antagonist like Agouti-related protein/AGRP promotes appetite. G-protein-coupled receptor that activates conventional Galphas signaling leading to induction of anorexogenic signaling in the hypothalamus to result in negative energy balance. Regulates the firing activity of neurons from the hypothalamus by alpha-MSH and AGRP independently of Galphas signaling by ligand-induced coupling of closure of inwardly rectifying potassium channel KCNJ13. In intestinal epithelial cells, plays a role in the inhibition of hepatic glucose production via nesfatin-1/NUCB2 leading to increased cyclic adenosine monophosphate (cAMP) levels and glucagon-like peptide 1 (GLP-1) secretion in the intestinal epithelium. The polypeptide is Melanocortin receptor 4 (MC4R) (Bos taurus (Bovine)).